The following is a 158-amino-acid chain: MQGTLSVWLAKRGLVHRSLGFDYQGIETLQIKPEDWHSIAVILYVYGYNYLRSQCAYDVAPGGLLASVYHLTRIEYGVHQAEEVCIKVFTHRSNPRIPSVFWVWKSTDFQERESYDMLGITYDSHPRLKRILMPESWIGWPLRKDYIAPNFYEIQDAY.

This sequence belongs to the complex I 30 kDa subunit family. NDH is composed of at least 16 different subunits, 5 of which are encoded in the nucleus.

It localises to the plastid. The protein resides in the chloroplast thylakoid membrane. It carries out the reaction a plastoquinone + NADH + (n+1) H(+)(in) = a plastoquinol + NAD(+) + n H(+)(out). The enzyme catalyses a plastoquinone + NADPH + (n+1) H(+)(in) = a plastoquinol + NADP(+) + n H(+)(out). NDH shuttles electrons from NAD(P)H:plastoquinone, via FMN and iron-sulfur (Fe-S) centers, to quinones in the photosynthetic chain and possibly in a chloroplast respiratory chain. The immediate electron acceptor for the enzyme in this species is believed to be plastoquinone. Couples the redox reaction to proton translocation, and thus conserves the redox energy in a proton gradient. This chain is NAD(P)H-quinone oxidoreductase subunit J, chloroplastic, found in Olimarabidopsis pumila (Dwarf rocket).